We begin with the raw amino-acid sequence, 366 residues long: DNA integrity scanning protein DisA (366 aa).

The DAC domain occupies 21 to 159 (VHTLKGTLQR…EGKSHMLEQP (139 aa)). ATP contacts are provided by residues glycine 88, leucine 106, and 119-123 (TRHRS).

This sequence belongs to the DisA family. In terms of assembly, homooctamer. Mg(2+) is required as a cofactor.

The catalysed reaction is 2 ATP = 3',3'-c-di-AMP + 2 diphosphate. Functionally, participates in a DNA-damage check-point. DisA forms globular foci that rapidly scan along the chromosomes searching for lesions. Its function is as follows. Also has diadenylate cyclase activity, catalyzing the condensation of 2 ATP molecules into cyclic di-AMP (c-di-AMP). c-di-AMP likely acts as a signaling molecule that may couple DNA integrity with a cellular process. In Corynebacterium glutamicum (strain ATCC 13032 / DSM 20300 / JCM 1318 / BCRC 11384 / CCUG 27702 / LMG 3730 / NBRC 12168 / NCIMB 10025 / NRRL B-2784 / 534), this protein is DNA integrity scanning protein DisA.